A 132-amino-acid polypeptide reads, in one-letter code: NADH-quinone oxidoreductase subunit A (132 aa).

Transmembrane regions (helical) follow at residues 14 to 34 (FFTFFFIAVSICVFMLSISWI), 66 to 86 (FYLVAIYFVLFDVEALYLYAW), and 96 to 116 (IGFIEALIFILFLLSGLIYLI).

Belongs to the complex I subunit 3 family. As to quaternary structure, NDH-1 is composed of 13 different subunits. Subunits NuoA, H, J, K, L, M, N constitute the membrane sector of the complex.

It localises to the cell membrane. The catalysed reaction is a quinone + NADH + 5 H(+)(in) = a quinol + NAD(+) + 4 H(+)(out). Functionally, NDH-1 shuttles electrons from NADH, via FMN and iron-sulfur (Fe-S) centers, to quinones in the respiratory chain. The immediate electron acceptor for the enzyme in this species is believed to be ubiquinone. Couples the redox reaction to proton translocation (for every two electrons transferred, four hydrogen ions are translocated across the cytoplasmic membrane), and thus conserves the redox energy in a proton gradient. This chain is NADH-quinone oxidoreductase subunit A, found in Buchnera aphidicola subsp. Baizongia pistaciae (strain Bp).